A 765-amino-acid chain; its full sequence is Probable ATP-dependent RNA helicase DDX27 (765 aa).

Positions 1 to 48 are disordered; that stretch reads MLSELGFIRTIGEDEDVQVEPETDSEDEEEEGPIVLGRKQKALQKNRS. Residues 13-32 are compositionally biased toward acidic residues; the sequence is EDEDVQVEPETDSEDEEEEG. 2 positions are modified to phosphoserine: S25 and S48. Positions 55 to 57 match the Required for interaction with the PEBOW complex motif; sequence FVF. Residues 88-148 form a disordered region; the sequence is EKIEKVRKKR…ESETDYSSAD (61 aa). A compositionally biased stretch (basic and acidic residues) spans 98–119; that stretch reads KTEDKEAKSGKSEKEKEAKEGS. Residues S135 and S146 each carry the phosphoserine modification. The Nuclear localization signal signature appears at 164–169; sequence KKKKKK. Residues 187 to 215 carry the Q motif motif; the sequence is LSFQDMNLSRPLLKAITAMGFKQPTPIQK. Positions 218 to 392 constitute a Helicase ATP-binding domain; sequence IPVGLLGKDI…SVSLKNPVRI (175 aa). Position 231–238 (231–238) interacts with ATP; sequence AATGTGKT. The DEAD box signature appears at 340-343; the sequence is DEAD. One can recognise a Helicase C-terminal domain in the interval 426–572; that stretch reads LLMRTFTDHV…DVILKFRDKI (147 aa). Basic residues-rich tracts occupy residues 685–694 and 744–765; these read KRNRRAKRAR and LGLPHQRRGGNFKSKSRYKRRK. The interval 685-765 is disordered; sequence KRNRRAKRAR…KSKSRYKRRK (81 aa).

Belongs to the DEAD box helicase family. DDX27/DRS1 subfamily. Associates with PeBoW complex, composed of BOP1, PES1 and WDR12. Interacts directly with BOP1 and PES1.

It localises to the nucleus. Its subcellular location is the nucleolus. It is found in the chromosome. It carries out the reaction ATP + H2O = ADP + phosphate + H(+). Its function is as follows. Probable ATP-dependent RNA helicase. Component of the nucleolar ribosomal RNA (rRNA) processing machinery that regulates 3' end formation of ribosomal 47S rRNA. The protein is Probable ATP-dependent RNA helicase DDX27 (DDX27) of Bos taurus (Bovine).